We begin with the raw amino-acid sequence, 292 residues long: Transmembrane and ubiquitin-like domain-containing protein 1 (292 aa).

The helical transmembrane segment at 11–31 threads the bilayer; sequence VTLLFGVVFLVLVLVLAWAST. Positions 34–143 are disordered; that stretch reads VEPPEHLLSP…TQPSAEDAAS (110 aa). The span at 71–80 shows a compositional bias: basic and acidic residues; it reads VRDEDDKSEP. Residues 84-94 show a composition bias toward low complexity; it reads AGAAGQSADGS. Residues 149–222 enclose the Ubiquitin-like domain; that stretch reads MVLRLKFLND…LHCHISQHAT (74 aa). The next 2 helical transmembrane spans lie at 237–257 and 269–289; these read VALN…SVLW and APAT…AFGV.

The protein resides in the membrane. The protein localises to the cytoplasm. Its subcellular location is the nucleus. May contribute to the regulation of translation during cell-cycle progression. May contribute to the regulation of cell proliferation. The membrane form is involved in sterol-regulated ubiquitination and degradation of HMG-CoA reductase HMGCR. May be involved in centrosome assembly. The sequence is that of Transmembrane and ubiquitin-like domain-containing protein 1 (tmub1) from Danio rerio (Zebrafish).